We begin with the raw amino-acid sequence, 253 residues long: Pupal cuticle protein (253 aa).

The first 18 residues, 1-18 (MKSMIVVACLALACGAHA), serve as a signal peptide directing secretion. The span at 54 to 66 (LQQASKNNPNPND) shows a compositional bias: polar residues. The tract at residues 54–74 (LQQASKNNPNPNDDGSYDPRW) is disordered. 3 consecutive repeat copies span residues 97–100 (AAPA), 115–118 (AAPA), and 154–157 (AAPA). Low complexity predominate over residues 155-167 (APAQQQWNAPAHQ). Disordered regions lie at residues 155-178 (APAQ…QDWN) and 187-206 (APAH…APAH). Polar residues predominate over residues 189–201 (AHQSWNGAPSWQS).

Component of the cuticle of the pupae of silk moth. In Bombyx mori (Silk moth), this protein is Pupal cuticle protein (PCP).